Reading from the N-terminus, the 292-residue chain is 11-beta-hydroxysteroid dehydrogenase 1 (292 aa).

A helical transmembrane segment spans residues 7–24 (YLLPILGIFLAYYYYSAN).

It belongs to the short-chain dehydrogenases/reductases (SDR) family. Homodimer. As to expression, expressed highest in liver and ovaries (corpora lutea, granulosa cells, thecal, uterine caruncle and intercarunculer tissues), lower expression in kidney and spleen, and lowest in the adrenal.

It is found in the endoplasmic reticulum membrane. It catalyses the reaction an 11beta-hydroxysteroid + NADP(+) = an 11-oxosteroid + NADPH + H(+). It carries out the reaction corticosterone + NADP(+) = 11-dehydrocorticosterone + NADPH + H(+). The enzyme catalyses cortisone + NADPH + H(+) = cortisol + NADP(+). The catalysed reaction is a 7beta-hydroxysteroid + NADP(+) = a 7-oxosteroid + NADPH + H(+). It catalyses the reaction 7-oxocholesterol + NADPH + H(+) = 7beta-hydroxycholesterol + NADP(+). It carries out the reaction chenodeoxycholate + NADP(+) = 7-oxolithocholate + NADPH + H(+). The enzyme catalyses 7-oxolithocholate + NADPH + H(+) = ursodeoxycholate + NADP(+). The catalysed reaction is glycochenodeoxycholate + NADP(+) = 7-oxoglycolithocholate + NADPH + H(+). It catalyses the reaction taurochenodeoxycholate + NADP(+) = 7-oxotaurolithocholate + NADPH + H(+). It carries out the reaction tauroursodeoxycholate + NADP(+) = 7-oxotaurolithocholate + NADPH + H(+). The enzyme catalyses glycoursodeoxycholate + NADP(+) = 7-oxoglycolithocholate + NADPH + H(+). The catalysed reaction is 7-oxopregnenolone + NADPH + H(+) = 7beta-hydroxypregnenolone + NADP(+). It catalyses the reaction 3beta,7alpha-dihydroxyandrost-5-en-17-one + NADP(+) = 3beta-hydroxy-5-androstene-7,17-dione + NADPH + H(+). It carries out the reaction 3beta-hydroxy-5-androstene-7,17-dione + NADPH + H(+) = 3beta,7beta-dihydroxyandrost-5-en-17-one + NADP(+). The enzyme catalyses 3beta-hydroxy-5alpha-androstane-7,17-dione + NADPH + H(+) = 3beta,7beta-dihydroxy-5alpha-androstan-17-one + NADP(+). Controls the reversible conversion of biologically active glucocorticoids such as cortisone to cortisol, and 11-dehydrocorticosterone to corticosterone in the presence of NADP(H). Participates in the corticosteroid receptor-mediated anti-inflammatory response, as well as metabolic and homeostatic processes. Plays a role in the secretion of aqueous humor in the eye, maintaining a normotensive, intraocular environment. Bidirectional in vitro, predominantly functions as a reductase in vivo, thereby increasing the concentration of active glucocorticoids. It has broad substrate specificity, besides glucocorticoids, it accepts other steroid and sterol substrates. Interconverts 7-oxo- and 7-hydroxy-neurosteroids such as 7-oxopregnenolone and 7beta-hydroxypregnenolone, 7-oxodehydroepiandrosterone (3beta-hydroxy-5-androstene-7,17-dione) and 7beta-hydroxydehydroepiandrosterone (3beta,7beta-dihydroxyandrost-5-en-17-one), among others. Catalyzes the stereo-specific conversion of the major dietary oxysterol, 7-ketocholesterol (7-oxocholesterol), into the more polar 7-beta-hydroxycholesterol metabolite. 7-oxocholesterol is one of the most important oxysterols, it participates in several events such as induction of apoptosis, accumulation in atherosclerotic lesions, lipid peroxidation, and induction of foam cell formation. Mediates the 7-oxo reduction of 7-oxolithocholate mainly to chenodeoxycholate, and to a lesser extent to ursodeoxycholate, both in its free form and when conjugated to glycine or taurine, providing a link between glucocorticoid activation and bile acid metabolism. Catalyzes the synthesis of 7-beta-25-dihydroxycholesterol from 7-oxo-25-hydroxycholesterol in vitro, which acts as a ligand for the G-protein-coupled receptor (GPCR) Epstein-Barr virus-induced gene 2 (EBI2) and may thereby regulate immune cell migration. The protein is 11-beta-hydroxysteroid dehydrogenase 1 of Bos taurus (Bovine).